The following is a 231-amino-acid chain: Urease accessory protein UreF (231 aa).

This sequence belongs to the UreF family. In terms of assembly, ureD, UreF and UreG form a complex that acts as a GTP-hydrolysis-dependent molecular chaperone, activating the urease apoprotein by helping to assemble the nickel containing metallocenter of UreC. The UreE protein probably delivers the nickel.

The protein localises to the cytoplasm. Required for maturation of urease via the functional incorporation of the urease nickel metallocenter. The polypeptide is Urease accessory protein UreF (Magnetococcus marinus (strain ATCC BAA-1437 / JCM 17883 / MC-1)).